Here is a 248-residue protein sequence, read N- to C-terminus: 3-deoxy-manno-octulosonate cytidylyltransferase (248 aa).

It belongs to the KdsB family.

The protein resides in the cytoplasm. The catalysed reaction is 3-deoxy-alpha-D-manno-oct-2-ulosonate + CTP = CMP-3-deoxy-beta-D-manno-octulosonate + diphosphate. It functions in the pathway nucleotide-sugar biosynthesis; CMP-3-deoxy-D-manno-octulosonate biosynthesis; CMP-3-deoxy-D-manno-octulosonate from 3-deoxy-D-manno-octulosonate and CTP: step 1/1. Its pathway is bacterial outer membrane biogenesis; lipopolysaccharide biosynthesis. Functionally, activates KDO (a required 8-carbon sugar) for incorporation into bacterial lipopolysaccharide in Gram-negative bacteria. This is 3-deoxy-manno-octulosonate cytidylyltransferase from Chlorobium chlorochromatii (strain CaD3).